A 168-amino-acid chain; its full sequence is G/U mismatch-specific DNA glycosylase (168 aa).

This sequence belongs to the uracil-DNA glycosylase (UDG) superfamily. TDG/mug family. In terms of assembly, binds DNA as a monomer.

Its subcellular location is the cytoplasm. The enzyme catalyses Specifically hydrolyzes mismatched double-stranded DNA and polynucleotides, releasing free uracil.. In terms of biological role, excises ethenocytosine and uracil, which can arise by alkylation or deamination of cytosine, respectively, from the corresponding mispairs with guanine in ds-DNA. It is capable of hydrolyzing the carbon-nitrogen bond between the sugar-phosphate backbone of the DNA and the mispaired base. The complementary strand guanine functions in substrate recognition. Required for DNA damage lesion repair in stationary-phase cells. In Salmonella dublin (strain CT_02021853), this protein is G/U mismatch-specific DNA glycosylase.